Reading from the N-terminus, the 70-residue chain is Beta sliding clamp (70 aa).

It belongs to the beta sliding clamp family. In terms of assembly, forms a ring-shaped head-to-tail homodimer around DNA which binds and tethers DNA polymerases and other proteins to the DNA. The DNA replisome complex has a single clamp-loading complex (3 tau and 1 each of delta, delta', psi and chi subunits) which binds 3 Pol III cores (1 core on the leading strand and 2 on the lagging strand) each with a beta sliding clamp dimer. Additional proteins in the replisome are other copies of gamma, psi and chi, Ssb, DNA helicase and RNA primase.

The protein localises to the cytoplasm. In terms of biological role, confers DNA tethering and processivity to DNA polymerases and other proteins. Acts as a clamp, forming a ring around DNA (a reaction catalyzed by the clamp-loading complex) which diffuses in an ATP-independent manner freely and bidirectionally along dsDNA. Initially characterized for its ability to contact the catalytic subunit of DNA polymerase III (Pol III), a complex, multichain enzyme responsible for most of the replicative synthesis in bacteria; Pol III exhibits 3'-5' exonuclease proofreading activity. The beta chain is required for initiation of replication as well as for processivity of DNA replication. The protein is Beta sliding clamp (dnaN) of Rhodobacter capsulatus (Rhodopseudomonas capsulata).